The primary structure comprises 347 residues: D-alanine--D-alanine ligase (347 aa).

One can recognise an ATP-grasp domain in the interval 131–333; it reads KRVLESAGIA…YPKLIERLVD (203 aa). ATP is bound at residue 161–216; it reads EEKLAYPVFTKPSNMGSSVGISKSENQEELRQALKLAFRYDSRVLVEQGVNAREIE. The Mg(2+) site is built by aspartate 287, glutamate 300, and asparagine 302.

The protein belongs to the D-alanine--D-alanine ligase family. Mg(2+) serves as cofactor. Mn(2+) is required as a cofactor.

The protein localises to the cytoplasm. It catalyses the reaction 2 D-alanine + ATP = D-alanyl-D-alanine + ADP + phosphate + H(+). The protein operates within cell wall biogenesis; peptidoglycan biosynthesis. Functionally, cell wall formation. The sequence is that of D-alanine--D-alanine ligase from Streptococcus pneumoniae serotype 4 (strain ATCC BAA-334 / TIGR4).